Consider the following 172-residue polypeptide: NADH-quinone oxidoreductase subunit B (172 aa).

Cysteine 52, cysteine 53, cysteine 117, and cysteine 147 together coordinate [4Fe-4S] cluster.

The protein belongs to the complex I 20 kDa subunit family. NDH-1 is composed of 14 different subunits. Subunits NuoB, C, D, E, F, and G constitute the peripheral sector of the complex. [4Fe-4S] cluster serves as cofactor.

It localises to the cell inner membrane. It catalyses the reaction a quinone + NADH + 5 H(+)(in) = a quinol + NAD(+) + 4 H(+)(out). NDH-1 shuttles electrons from NADH, via FMN and iron-sulfur (Fe-S) centers, to quinones in the respiratory chain. Couples the redox reaction to proton translocation (for every two electrons transferred, four hydrogen ions are translocated across the cytoplasmic membrane), and thus conserves the redox energy in a proton gradient. In Ehrlichia ruminantium (strain Gardel), this protein is NADH-quinone oxidoreductase subunit B.